The primary structure comprises 326 residues: Cinnamoyl-CoA reductase CAD2 (326 aa).

Residues 14-20, Arg39, Lys46, 66-67, and 86-88 each bind NADP(+); these read GASGYIA, NL, and TAS. The (E)-coniferaldehyde site is built by Ser130, Tyr136, Arg141, and Tyr165. Residues Tyr165, Lys169, 192-195, and Ser207 contribute to the NADP(+) site; that span reads PAMV. The Proton donor role is filled by Lys169. Residues Met194, Ser207, Phe226, Val257, and Tyr290 each coordinate (E)-coniferaldehyde.

It belongs to the NAD(P)-dependent epimerase/dehydratase family. Dihydroflavonol-4-reductase subfamily.

The protein resides in the cytoplasm. It catalyses the reaction (E)-cinnamaldehyde + NADP(+) + CoA = (E)-cinnamoyl-CoA + NADPH + H(+). It carries out the reaction (E)-coniferaldehyde + NADP(+) + CoA = (E)-feruloyl-CoA + NADPH + H(+). The catalysed reaction is (E)-4-coumaraldehyde + NADP(+) + CoA = (E)-4-coumaroyl-CoA + NADPH + H(+). It participates in aromatic compound metabolism; phenylpropanoid biosynthesis. Involved in lignin biosynthesis. Regulates the monolignol composition by catalyzing the conversion of cinnamoyl-CoAs into their corresponding cinnamaldehydes. Can use coumaraldehyde and coniferaldehyde as substrates, but barely sinapaldehyde. This Medicago truncatula (Barrel medic) protein is Cinnamoyl-CoA reductase CAD2.